Consider the following 792-residue polypeptide: Lon protease (792 aa).

The Lon N-terminal domain occupies 16–208 (LPILPLRETV…KVTYYLTREL (193 aa)). Position 360–367 (360–367 (GPPGVGKT)) interacts with ATP. The Lon proteolytic domain maps to 597-778 (KDEVGVATGL…DEVLNLALLE (182 aa)). Catalysis depends on residues Ser-684 and Lys-727.

Belongs to the peptidase S16 family. As to quaternary structure, homohexamer. Organized in a ring with a central cavity.

The protein resides in the cytoplasm. The enzyme catalyses Hydrolysis of proteins in presence of ATP.. Its function is as follows. ATP-dependent serine protease that mediates the selective degradation of mutant and abnormal proteins as well as certain short-lived regulatory proteins. Required for cellular homeostasis and for survival from DNA damage and developmental changes induced by stress. Degrades polypeptides processively to yield small peptide fragments that are 5 to 10 amino acids long. Binds to DNA in a double-stranded, site-specific manner. This is Lon protease from Dictyoglomus thermophilum (strain ATCC 35947 / DSM 3960 / H-6-12).